The primary structure comprises 767 residues: Mst2 complex subunit nto1 (767 aa).

Residues 194–244 (DGRCVICNEAECENSNAIVFCDNCNTSVHQNCYGIPFVPEGQWFCKKCLLA) form a PHD-type 1 zinc finger. The C2HC pre-PHD-type zinc-finger motif lies at 248 to 281 (VICCAFCPDRDGAFCTTLDGRWCHTICAIAIPEI). The PHD-type 2 zinc-finger motif lies at 305-363 (LVCCICKLRWGTCVQCSDKNCYAAYHITCARRAGFFYKIYSHSASYDSVDMETYCDKHT). Positions 724 to 752 (VTGQSNHALPNSVTKKNGTKQPYTKNSLP) are enriched in polar residues. Residues 724-767 (VTGQSNHALPNSVTKKNGTKQPYTKNSLPFNERITRSKAKKNYS) form a disordered region.

Component of the mst2 complex composed of at least eaf6, mst2, nto1, pdp3, ptf1, ptf2 and tfg3.

Its subcellular location is the cytoplasm. It is found in the nucleus. Component of the mst2 complex which is a highly specific H3 lysine 14 (H3K14) acetyltransferase that functions together with gcn5 to regulate global levels of H3K14 acetylation (H3K14ac), critical for DNA damage checkpoint activation. The sequence is that of Mst2 complex subunit nto1 (nto1) from Schizosaccharomyces pombe (strain 972 / ATCC 24843) (Fission yeast).